The sequence spans 123 residues: Chaperone protein SycN (123 aa).

In terms of assembly, interacts with YscB to form a complex which specifically binds to YopN.

The protein resides in the cytoplasm. It is found in the cell inner membrane. Functionally, functions as a specific chaperone for YopN. It could facilitate the secretion and the subsequent translocation of YopN. The chain is Chaperone protein SycN (sycN) from Yersinia pseudotuberculosis serotype I (strain IP32953).